A 588-amino-acid polypeptide reads, in one-letter code: Urease subunit alpha (588 aa).

The Urease domain occupies 149–588 (GGIDTHIHFI…LPMAQRYFLF (440 aa)). His154, His156, and Lys237 together coordinate Ni(2+). Residue Lys237 is modified to N6-carboxylysine. His239 contributes to the substrate binding site. Ni(2+) contacts are provided by His266 and His292. His340 serves as the catalytic Proton donor. Asp380 serves as a coordination point for Ni(2+).

It belongs to the metallo-dependent hydrolases superfamily. Urease alpha subunit family. As to quaternary structure, heterotrimer of UreA (gamma), UreB (beta) and UreC (alpha) subunits. Three heterotrimers associate to form the active enzyme. It depends on Ni cation as a cofactor. In terms of processing, carboxylation allows a single lysine to coordinate two nickel ions.

It is found in the cytoplasm. It catalyses the reaction urea + 2 H2O + H(+) = hydrogencarbonate + 2 NH4(+). The protein operates within nitrogen metabolism; urea degradation; CO(2) and NH(3) from urea (urease route): step 1/1. This chain is Urease subunit alpha, found in Opitutus terrae (strain DSM 11246 / JCM 15787 / PB90-1).